We begin with the raw amino-acid sequence, 156 residues long: MKFNDVYNKHHKIIHHLLKKYNISYNYDEYYQLLLIKMWQLSQIYKPSSKQSLSSFLFTRLNFYLIDLFRQQNQLKDVILCENNSPTLTEQPTYFNEHDLRLQDIFKFLNHRERLWLKLYLEGYKQFEIAEIMSLSLSTIKLIKTSVKRKCQHNFK.

The short motif at 29 to 44 (EYYQLLLIKMWQLSQI) is the Polymerase core binding element. A DNA-binding region (H-T-H motif) is located at residues 126–145 (QFEIAEIMSLSLSTIKLIKT).

This sequence belongs to the sigma-70 factor family.

In terms of biological role, sigma factors are initiation factors that promote the attachment of RNA polymerase to specific initiation sites and are then released. Sigma-S contributes to the protection against external stress, thus playing a role in cellular fitness and survival. This is RNA polymerase sigma factor SigS (sigS) from Staphylococcus aureus (strain bovine RF122 / ET3-1).